A 146-amino-acid chain; its full sequence is Hemoglobin subunit beta (146 aa).

Residues 2–146 (HWTAEEKQLI…VAHALARKYH (145 aa)) form the Globin domain. Heme b-binding residues include histidine 63 and histidine 92.

The protein belongs to the globin family. In terms of assembly, heterotetramer of two alpha chains and two beta chains. Red blood cells.

Functionally, involved in oxygen transport from the lung to the various peripheral tissues. The protein is Hemoglobin subunit beta (HBB) of Aegypius monachus (Cinereous vulture).